Reading from the N-terminus, the 84-residue chain is MNKEEIIKEFQIHEGDTGSAEVQVALLTARIKHLTEHLKKHPKDYHSRRGLMKLVGRRRKILKYLRNKNPEAYKEVIQKLGLRK.

The protein belongs to the universal ribosomal protein uS15 family. As to quaternary structure, part of the 30S ribosomal subunit. Forms a bridge to the 50S subunit in the 70S ribosome, contacting the 23S rRNA.

In terms of biological role, one of the primary rRNA binding proteins, it binds directly to 16S rRNA where it helps nucleate assembly of the platform of the 30S subunit by binding and bridging several RNA helices of the 16S rRNA. Its function is as follows. Forms an intersubunit bridge (bridge B4) with the 23S rRNA of the 50S subunit in the ribosome. The sequence is that of Small ribosomal subunit protein uS15 from Thermosipho melanesiensis (strain DSM 12029 / CIP 104789 / BI429).